The following is a 91-amino-acid chain: MIPRVLILLTLVALFCACSTLAAVAHIEVDCIPPFTVYLLYGFVTLILICSLVTVVIAFIQFIDWICVRIAYLRHHPQYRDRTIADLLRIL.

Residues 1–22 (MIPRVLILLTLVALFCACSTLA) form the signal peptide. Residues 23–34 (AVAHIEVDCIPP) lie on the Lumenal side of the membrane. The chain crosses the membrane as a helical span at residues 35-60 (FTVYLLYGFVTLILICSLVTVVIAFI). Residues 61–91 (QFIDWICVRIAYLRHHPQYRDRTIADLLRIL) lie on the Cytoplasmic side of the membrane.

This sequence belongs to the adenoviridae E3B family.

It is found in the host endoplasmic reticulum membrane. Down-regulates the EGF receptor. The protein is Early E3B 10.4 kDa protein of Homo sapiens (Human).